Consider the following 389-residue polypeptide: POU domain, class 5, transcription factor 3 (389 aa).

Low complexity-rich tracts occupy residues 1–18 and 145–165; these read MFSPDGGLPAAPFGLLPD and LANLGSSGSSSGAASEGGHSS. Disordered stretches follow at residues 1 to 88 and 145 to 177; these read MFSP…APPA and LANLGSSGSSSGAASEGGHSSDSGDEDAPTSEE. Residues 167–177 show a composition bias toward acidic residues; it reads SGDEDAPTSEE. A POU-specific domain is found at 170-244; it reads EDAPTSEELE…LLQRWLNEAE (75 aa). The segment at residues 264–323 is a DNA-binding region (homeobox); the sequence is KRKRRTSIETNVKGTLESFFRKCVKPSPQEISQIAEDLNLDKDVVRVWFCNRRQKGKRLL.

This sequence belongs to the POU transcription factor family.

The protein localises to the nucleus. Its function is as follows. Required for the maintenance of pluripotency and self-renewal of embryonic stem cells. Transcriptional activator that binds the DNA consensus sequence 5'-ATGCAAAT-3'. The polypeptide is POU domain, class 5, transcription factor 3 (POU5F3) (Gallus gallus (Chicken)).